A 293-amino-acid chain; its full sequence is AKT-interacting protein (293 aa).

Residues 1–11 (MNPFWSMSTSS) show a composition bias toward polar residues. The interval 1–63 (MNPFWSMSTS…TSPAPAAQST (63 aa)) is disordered. The span at 14–23 (KRSEGEEKTL) shows a compositional bias: basic and acidic residues. Phosphoserine is present on serine 30. The UBC core domain occupies 74 to 222 (YLEYSLLAEF…VVDSVQVCTA (149 aa)). The span at 253–265 (MLTQKKKPEEQHN) shows a compositional bias: basic and acidic residues. Residues 253–293 (MLTQKKKPEEQHNKSVHVAGLSWVKPGSVQPFSKEEKTVAT) form a disordered region.

Belongs to the ubiquitin-conjugating enzyme family. FTS subfamily. Component of the FTS/Hook/FHIP complex (FHF complex), composed of AKTIP/FTS, FHIP1B, and one or more members of the Hook family of proteins HOOK1, HOOK2, and HOOK3. Interacts directly with HOOK1, HOOK2 and HOOK3. The FHF complex associates with the homotypic vesicular sorting complex (the HOPS complex). Also interacts with AKT1. May interact with FHIP1A.

The protein resides in the cytoplasm. The protein localises to the cell membrane. Its function is as follows. Component of the FTS/Hook/FHIP complex (FHF complex). The FHF complex may function to promote vesicle trafficking and/or fusion via the homotypic vesicular protein sorting complex (the HOPS complex). Regulates apoptosis by enhancing phosphorylation and activation of AKT1. Increases release of TNFSF6 via the AKT1/GSK3B/NFATC1 signaling cascade. FHF complex promotes the distribution of AP-4 complex to the perinuclear area of the cell. The polypeptide is AKT-interacting protein (AKTIP) (Pongo abelii (Sumatran orangutan)).